Consider the following 137-residue polypeptide: Small ribosomal subunit protein uS12 (137 aa).

Residues 1 to 55 (MPTINQLVRKPRKSKVEKSDSPALNKGYNSFKKTQTNVNSPQKRGVCTRVGTMTP) are disordered. The span at 27-42 (GYNSFKKTQTNVNSPQ) shows a compositional bias: polar residues. Position 102 is a 3-methylthioaspartic acid (Asp-102).

This sequence belongs to the universal ribosomal protein uS12 family. As to quaternary structure, part of the 30S ribosomal subunit. Contacts proteins S8 and S17. May interact with IF1 in the 30S initiation complex.

In terms of biological role, with S4 and S5 plays an important role in translational accuracy. Functionally, interacts with and stabilizes bases of the 16S rRNA that are involved in tRNA selection in the A site and with the mRNA backbone. Located at the interface of the 30S and 50S subunits, it traverses the body of the 30S subunit contacting proteins on the other side and probably holding the rRNA structure together. The combined cluster of proteins S8, S12 and S17 appears to hold together the shoulder and platform of the 30S subunit. This Enterococcus faecalis (strain ATCC 700802 / V583) protein is Small ribosomal subunit protein uS12.